The chain runs to 940 residues: DNA gyrase subunit A (940 aa).

Residues 1–22 form a disordered region; that stretch reads MSDHTNPPSAPPDDDPNGGSLL. The 491-residue stretch at 48–538 folds into the Topo IIA-type catalytic domain; it reads LPDARDGLKP…SLADQDDESL (491 aa). The O-(5'-phospho-DNA)-tyrosine intermediate role is filled by Tyr136. Residues 565-571 carry the GyrA-box motif; the sequence is QHRGGRG. Acidic residues predominate over residues 914–924; that stretch reads ESVDDNGDDAD. The interval 914-940 is disordered; the sequence is ESVDDNGDDADSVAPAAPDGQVTDSDD.

It belongs to the type II topoisomerase GyrA/ParC subunit family. Heterotetramer, composed of two GyrA and two GyrB chains. In the heterotetramer, GyrA contains the active site tyrosine that forms a transient covalent intermediate with DNA, while GyrB binds cofactors and catalyzes ATP hydrolysis.

The protein localises to the cytoplasm. It carries out the reaction ATP-dependent breakage, passage and rejoining of double-stranded DNA.. Its function is as follows. A type II topoisomerase that negatively supercoils closed circular double-stranded (ds) DNA in an ATP-dependent manner to modulate DNA topology and maintain chromosomes in an underwound state. Negative supercoiling favors strand separation, and DNA replication, transcription, recombination and repair, all of which involve strand separation. Also able to catalyze the interconversion of other topological isomers of dsDNA rings, including catenanes and knotted rings. Type II topoisomerases break and join 2 DNA strands simultaneously in an ATP-dependent manner. The polypeptide is DNA gyrase subunit A (Granulibacter bethesdensis (strain ATCC BAA-1260 / CGDNIH1)).